A 208-amino-acid polypeptide reads, in one-letter code: Small ribosomal subunit protein uS4 (208 aa).

The disordered stretch occupies residues 31–51; sequence SALDKRAYGPGQHGQRRAKTS. One can recognise an S4 RNA-binding domain in the interval 98 to 156; that stretch reads RRLDNVVYRMGFATTRSSARQLVTHGHVLVDGKRLDIPSYFVRSGQKIEIKEKTKSNPQ.

This sequence belongs to the universal ribosomal protein uS4 family. In terms of assembly, part of the 30S ribosomal subunit. Contacts protein S5. The interaction surface between S4 and S5 is involved in control of translational fidelity.

In terms of biological role, one of the primary rRNA binding proteins, it binds directly to 16S rRNA where it nucleates assembly of the body of the 30S subunit. With S5 and S12 plays an important role in translational accuracy. This Helicobacter pylori (strain HPAG1) protein is Small ribosomal subunit protein uS4.